Reading from the N-terminus, the 144-residue chain is Small ribosomal subunit protein uS11c (144 aa).

Belongs to the universal ribosomal protein uS11 family. In terms of assembly, part of the 30S ribosomal subunit.

The protein localises to the plastid. The protein resides in the chloroplast. The protein is Small ribosomal subunit protein uS11c of Oenothera biennis (German evening primrose).